Reading from the N-terminus, the 229-residue chain is Peptidase E (229 aa).

Active-site charge relay system residues include Ser-120, Asp-135, and His-157.

This sequence belongs to the peptidase S51 family.

The protein resides in the cytoplasm. It carries out the reaction Dipeptidase E catalyzes the hydrolysis of dipeptides Asp-|-Xaa. It does not act on peptides with N-terminal Glu, Asn or Gln, nor does it cleave isoaspartyl peptides.. Functionally, hydrolyzes dipeptides containing N-terminal aspartate residues. May play a role in allowing the cell to use peptide aspartate to spare carbon otherwise required for the synthesis of the aspartate family of amino acids. The chain is Peptidase E from Salmonella newport (strain SL254).